Consider the following 153-residue polypeptide: Large ribosomal subunit protein uL13 (153 aa).

Positions 134 to 153 are disordered; that stretch reads EAQQPQALDVGSLNRKNVSA.

Belongs to the universal ribosomal protein uL13 family. In terms of assembly, part of the 50S ribosomal subunit.

Its function is as follows. This protein is one of the early assembly proteins of the 50S ribosomal subunit, although it is not seen to bind rRNA by itself. It is important during the early stages of 50S assembly. The chain is Large ribosomal subunit protein uL13 from Methylorubrum extorquens (strain CM4 / NCIMB 13688) (Methylobacterium extorquens).